We begin with the raw amino-acid sequence, 395 residues long: Synaptotagmin-8 (395 aa).

Over 1-44 (MQADRSMKMGHVSNPLSTSAPVDATAGPNLIPDLITKIPWPRWI) the chain is Extracellular. A helical; Signal-anchor for type III membrane protein membrane pass occupies residues 45–65 (LFIAILAAGVLLVSCLLCVIC). The Cytoplasmic segment spans residues 66-395 (YCCHRQRHRK…PRLPLLRPRS (330 aa)). C2 domains lie at 113–229 (PWGQ…ESWY) and 241–370 (QMGE…AQWH).

It belongs to the synaptotagmin family. In terms of assembly, homodimer or homooligomer. Homodimerization and homooligomerization do not depend on Ca(2+). Interacts with SYNCRIP isoform 2 C-terminus. Binds inositol 1,3,4,5-tetrakisphosphate (IP4). Binds to AP2 in a Ca(2+)-independent manner. Interacts with STX1A, STX1B and STX2; the interaction is Ca(2+)-dependent. As to expression, ubiquitous. Strongly expressed in heart, kidney, cerebral cortex, pancreas, and many insulin-secreting cells; lower expression in spleen. Broadly distributed in kidney.

Its subcellular location is the cell membrane. It is found in the cytoplasmic vesicle. It localises to the secretory vesicle. The protein localises to the acrosome. Its function is as follows. Involved in the trafficking and exocytosis of secretory vesicles in non-neuronal tissues. Mediates Ca(2+)-regulation of exocytosis acrosomal reaction in sperm. May mediate Ca(2+)-regulation of exocytosis in insulin secreted cells. The polypeptide is Synaptotagmin-8 (Syt8) (Rattus norvegicus (Rat)).